Here is a 491-residue protein sequence, read N- to C-terminus: 3-epi-6-deoxocathasterone 23-monooxygenase CYP90D1 (491 aa).

The chain crosses the membrane as a helical span at residues 7-27 (LLFFSFFFFIIIVIFNKINGL). Residue cysteine 442 participates in heme binding.

It belongs to the cytochrome P450 family. Heme is required as a cofactor. Expressed in leaf vascular tissue.

It is found in the endoplasmic reticulum membrane. It carries out the reaction 3-epi-6-deoxocathasterone + reduced [NADPH--hemoprotein reductase] + O2 = 6-deoxotyphasterol + oxidized [NADPH--hemoprotein reductase] + H2O + H(+). The catalysed reaction is (22S,24R)-22-hydroxy-5alpha-ergostan-3-one + reduced [NADPH--hemoprotein reductase] + O2 = 3-dehydro-6-deoxoteasterone + oxidized [NADPH--hemoprotein reductase] + H2O + H(+). It functions in the pathway plant hormone biosynthesis; brassinosteroid biosynthesis. Involved in brassinosteroid (BR) biosynthesis. May convert teasterone (TE) to 3-dehydroteasterone (3DT, 3-DHT), or 6-deoxoteasterone (6-deoxoTE) to 3-dehydro-6-deoxoteasterone (6-deoxo3DT, 6-deoxo3DHT). C-23 hydroxylase that converts directly (22S,24R)-22-hydroxy-5-alpha-ergostan-3-one and 3-epi-6-deoxocathasterone to 3-dehydro-6-deoxoteasterone (6-deoxo3DT, 6-deoxo3DHT) and 6-deoxotyphasterol (6-deoxoTY), respectively. These C-23 hydroxylation shortcuts bypass campestanol, 6-deoxocathasterone, and 6-deoxoteasterone (6-deoxoTE). Also catalyzes the conversion of cathasterone to teasterone (TE), 6-deoxotyphasterol (6-deoxoTY) to 6-deoxocathasterone (6-deoxoCT), (22S,24R)-22-hydroxyergost-4-en-3-one (22-OH-4-en-3-one) to (22R,23R)-22,23-dihydroxy-campest-4-en-3-one (22,23-diOH-4-en-3-one) and (22S)-22-hydroxycampesterol (22-OHCR) to (22R,23R)-22,23-dihydroxycampesterol (22,23-diOHCR). The sequence is that of 3-epi-6-deoxocathasterone 23-monooxygenase CYP90D1 from Arabidopsis thaliana (Mouse-ear cress).